A 165-amino-acid polypeptide reads, in one-letter code: Cytochrome c-type biogenesis protein CcmE (165 aa).

The Cytoplasmic segment spans residues 1-7; that stretch reads MTRKQRR. A helical; Signal-anchor for type II membrane protein membrane pass occupies residues 8–28; sequence LMMIGGAGVVLVVAVGLVLNA. Residues 29–165 are Periplasmic-facing; that stretch reads MRGSIVFFST…ASADAMRPAR (137 aa). His122 and Tyr126 together coordinate heme. The span at 138–149 shows a compositional bias: basic and acidic residues; the sequence is QGHWKDDYEKKP. The tract at residues 138-165 is disordered; that stretch reads QGHWKDDYEKKPPGPGAAASADAMRPAR. Over residues 153–165 the composition is skewed to low complexity; that stretch reads GAAASADAMRPAR.

Belongs to the CcmE/CycJ family.

It is found in the cell inner membrane. Functionally, heme chaperone required for the biogenesis of c-type cytochromes. Transiently binds heme delivered by CcmC and transfers the heme to apo-cytochromes in a process facilitated by CcmF and CcmH. In Rhodopseudomonas palustris (strain HaA2), this protein is Cytochrome c-type biogenesis protein CcmE.